We begin with the raw amino-acid sequence, 96 residues long: Aspartyl/glutamyl-tRNA(Asn/Gln) amidotransferase subunit C (96 aa).

Belongs to the GatC family. As to quaternary structure, heterotrimer of A, B and C subunits.

The enzyme catalyses L-glutamyl-tRNA(Gln) + L-glutamine + ATP + H2O = L-glutaminyl-tRNA(Gln) + L-glutamate + ADP + phosphate + H(+). It catalyses the reaction L-aspartyl-tRNA(Asn) + L-glutamine + ATP + H2O = L-asparaginyl-tRNA(Asn) + L-glutamate + ADP + phosphate + 2 H(+). Its function is as follows. Allows the formation of correctly charged Asn-tRNA(Asn) or Gln-tRNA(Gln) through the transamidation of misacylated Asp-tRNA(Asn) or Glu-tRNA(Gln) in organisms which lack either or both of asparaginyl-tRNA or glutaminyl-tRNA synthetases. The reaction takes place in the presence of glutamine and ATP through an activated phospho-Asp-tRNA(Asn) or phospho-Glu-tRNA(Gln). The chain is Aspartyl/glutamyl-tRNA(Asn/Gln) amidotransferase subunit C from Bacillus licheniformis (strain ATCC 14580 / DSM 13 / JCM 2505 / CCUG 7422 / NBRC 12200 / NCIMB 9375 / NCTC 10341 / NRRL NRS-1264 / Gibson 46).